Reading from the N-terminus, the 303-residue chain is Protease HtpX homolog (303 aa).

Transmembrane regions (helical) follow at residues 4–24 (VVLFLLTNLAVIAVLSITARI) and 38–58 (MGMLLAFAALIGFGGAFISLL). His-144 serves as a coordination point for Zn(2+). The active site involves Glu-145. His-148 is a binding site for Zn(2+). A run of 2 helical transmembrane segments spans residues 152–172 (GDMVTLTLIQGVVNTFVIFLS) and 199–219 (ISSIAFEIVFGVLASIVVMYF). Residue Glu-224 coordinates Zn(2+).

Belongs to the peptidase M48B family. The cofactor is Zn(2+).

It is found in the cell inner membrane. The sequence is that of Protease HtpX homolog from Chlorobium phaeobacteroides (strain BS1).